Consider the following 114-residue polypeptide: Probable non-functional T cell receptor beta variable 6-7 (114 aa).

An N-terminal signal peptide occupies residues 1-21 (MSLGLLCCVAFSLLWAGPMNA). The 93-residue stretch at 22 to 114 (GVTQTPKFHV…TSVYFCASSY (93 aa)) folds into the Ig-like domain. The cysteines at positions 42 and 110 are disulfide-linked. N-linked (GlcNAc...) asparagine glycosylation occurs at Asn84.

In terms of assembly, alpha-beta TR is a heterodimer composed of an alpha and beta chain; disulfide-linked. The alpha-beta TR is associated with the transmembrane signaling CD3 coreceptor proteins to form the TR-CD3 (TcR or TCR). The assembly of alpha-beta TR heterodimers with CD3 occurs in the endoplasmic reticulum where a single alpha-beta TR heterodimer associates with one CD3D-CD3E heterodimer, one CD3G-CD3E heterodimer and one CD247 homodimer forming a stable octameric structure. CD3D-CD3E and CD3G-CD3E heterodimers preferentially associate with TR alpha and TR beta chains, respectively. The association of the CD247 homodimer is the last step of TcR assembly in the endoplasmic reticulum and is required for transport to the cell surface.

The protein localises to the cell membrane. Probable non-functional open reading frame (ORF) of V region of the variable domain of T cell receptor (TR) beta chain. Non-functional ORF generally cannot participate in the synthesis of a productive T cell receptor (TR) chain due to altered V-(D)-J or switch recombination and/or splicing site (at mRNA level) and/or conserved amino acid change (protein level). Alpha-beta T cell receptors are antigen specific receptors which are essential to the immune response and are present on the cell surface of T lymphocytes. Recognize peptide-major histocompatibility (MH) (pMH) complexes that are displayed by antigen presenting cells (APC), a prerequisite for efficient T cell adaptive immunity against pathogens. Binding of alpha-beta TR to pMH complex initiates TR-CD3 clustering on the cell surface and intracellular activation of LCK that phosphorylates the ITAM motifs of CD3G, CD3D, CD3E and CD247 enabling the recruitment of ZAP70. In turn ZAP70 phosphorylates LAT, which recruits numerous signaling molecules to form the LAT signalosome. The LAT signalosome propagates signal branching to three major signaling pathways, the calcium, the mitogen-activated protein kinase (MAPK) kinase and the nuclear factor NF-kappa-B (NF-kB) pathways, leading to the mobilization of transcription factors that are critical for gene expression and essential for T cell growth and differentiation. The T cell repertoire is generated in the thymus, by V-(D)-J rearrangement. This repertoire is then shaped by intrathymic selection events to generate a peripheral T cell pool of self-MH restricted, non-autoaggressive T cells. Post-thymic interaction of alpha-beta TR with the pMH complexes shapes TR structural and functional avidity. The protein is Probable non-functional T cell receptor beta variable 6-7 of Homo sapiens (Human).